We begin with the raw amino-acid sequence, 495 residues long: MSYLLALDQGTTSSRAIIFDEKGQIHATAQRETRIKTPNSGWVEQDANEIWSSQIAVIQQALASAHILAKDIKALGLTNQRETTVVWDKRTGKALAPAIIWQDRRAAQWCNTLIENGMLVQVQQKTGLRIDPYFSAGKLVWLLENIAGFRILAEQGHAAFGTIDSWLVWNLTQGAEHIIEASNASRTMLMNLSTQMWDEDLLNKFNIPAAILPKIISSDAYVADTAQGLLGSTIPITGILGDQQAALFGQSCFEVGSAKNTYGTGCFMLFNTGDQLQFSQNQLLTTLAWQCQNQTRYALEGSVFMAGAIVQWLRDGLGLIQHSAQVEQLASQVQSTEGVVLVPAFTGLGAPHWDSEARALLCGMSRGTTKAHIARAALEAIAFQVSDVLCAMQSDLSRPLKELRVDGGASQNDMLMQFQADILNVPVLRPKMLESTAWGAAAMAGLKAGVFTNLDEIAASWQLDRTFEPKMKNDERESRLCEWSQALKRAKSNLI.

ADP is bound at residue threonine 11. ATP is bound by residues threonine 11, threonine 12, and serine 13. Sn-glycerol 3-phosphate is bound at residue threonine 11. Arginine 15 serves as a coordination point for ADP. Residues arginine 81, glutamate 82, tyrosine 133, and aspartate 242 each coordinate sn-glycerol 3-phosphate. Residues arginine 81, glutamate 82, tyrosine 133, aspartate 242, and glutamine 243 each contribute to the glycerol site. The ADP site is built by threonine 264 and glycine 307. Positions 264, 307, 311, and 408 each coordinate ATP. Positions 408 and 412 each coordinate ADP.

This sequence belongs to the FGGY kinase family.

The catalysed reaction is glycerol + ATP = sn-glycerol 3-phosphate + ADP + H(+). The protein operates within polyol metabolism; glycerol degradation via glycerol kinase pathway; sn-glycerol 3-phosphate from glycerol: step 1/1. With respect to regulation, inhibited by fructose 1,6-bisphosphate (FBP). In terms of biological role, key enzyme in the regulation of glycerol uptake and metabolism. Catalyzes the phosphorylation of glycerol to yield sn-glycerol 3-phosphate. The sequence is that of Glycerol kinase from Acinetobacter baylyi (strain ATCC 33305 / BD413 / ADP1).